We begin with the raw amino-acid sequence, 249 residues long: Probable septum site-determining protein MinC (249 aa).

The segment at 89–130 (SLFEPGMPPAMKGGRPAPDFEVPEVDPADPPKAGKGKAAAPI) is disordered. The span at 119-129 (PKAGKGKAAAP) shows a compositional bias: low complexity.

Belongs to the MinC family. Interacts with MinD and FtsZ.

In terms of biological role, cell division inhibitor that blocks the formation of polar Z ring septums. Rapidly oscillates between the poles of the cell to destabilize FtsZ filaments that have formed before they mature into polar Z rings. Prevents FtsZ polymerization. This is Probable septum site-determining protein MinC from Rhizobium meliloti (strain 1021) (Ensifer meliloti).